A 194-amino-acid chain; its full sequence is dTTP/UTP pyrophosphatase (194 aa).

Asp73 (proton acceptor) is an active-site residue.

Belongs to the Maf family. YhdE subfamily. A divalent metal cation is required as a cofactor.

The protein resides in the cytoplasm. The catalysed reaction is dTTP + H2O = dTMP + diphosphate + H(+). The enzyme catalyses UTP + H2O = UMP + diphosphate + H(+). Functionally, nucleoside triphosphate pyrophosphatase that hydrolyzes dTTP and UTP. May have a dual role in cell division arrest and in preventing the incorporation of modified nucleotides into cellular nucleic acids. The protein is dTTP/UTP pyrophosphatase of Clostridium botulinum (strain Loch Maree / Type A3).